Consider the following 102-residue polypeptide: 10 kDa heat shock protein, mitochondrial (102 aa).

A2 is modified (N-acetylalanine). K8 carries the N6-acetyllysine modification. Residue K28 is modified to N6-succinyllysine. K40 is subject to N6-acetyllysine; alternate. N6-malonyllysine; alternate is present on residues K40, K54, and K56. An N6-succinyllysine; alternate mark is found at K40, K54, and K56. Position 56 is an N6-acetyllysine; alternate (K56). S57 is subject to Phosphoserine. 2 positions are modified to N6-acetyllysine; alternate: K66 and K70. N6-succinyllysine; alternate occurs at positions 66 and 70. T79 carries the phosphothreonine modification. Residues K80 and K86 each carry the N6-acetyllysine; alternate modification. N6-succinyllysine; alternate is present on residues K80 and K86. Residue K99 is modified to N6-acetyllysine.

Belongs to the GroES chaperonin family. As to quaternary structure, homoheptamer arranged in a ring structure. 2 heptameric Hsp10 rings interact with a Hsp60 tetradecamer in the structure of a back-to-back double heptameric ring to form the symmetrical football complex.

The protein localises to the mitochondrion matrix. Its function is as follows. Co-chaperonin implicated in mitochondrial protein import and macromolecular assembly. Together with Hsp60, facilitates the correct folding of imported proteins. May also prevent misfolding and promote the refolding and proper assembly of unfolded polypeptides generated under stress conditions in the mitochondrial matrix. The functional units of these chaperonins consist of heptameric rings of the large subunit Hsp60, which function as a back-to-back double ring. In a cyclic reaction, Hsp60 ring complexes bind one unfolded substrate protein per ring, followed by the binding of ATP and association with 2 heptameric rings of the co-chaperonin Hsp10. This leads to sequestration of the substrate protein in the inner cavity of Hsp60 where, for a certain period of time, it can fold undisturbed by other cell components. Synchronous hydrolysis of ATP in all Hsp60 subunits results in the dissociation of the chaperonin rings and the release of ADP and the folded substrate protein. This chain is 10 kDa heat shock protein, mitochondrial (Hspe1), found in Mus musculus (Mouse).